We begin with the raw amino-acid sequence, 134 residues long: uncharacterized protein (134 aa).

The helical transmembrane segment at 4–24 threads the bilayer; sequence NLLILLSLLLVVVAIMWWLYE.

It localises to the membrane. This is an uncharacterized protein from Invertebrate iridescent virus 6 (IIV-6).